The sequence spans 434 residues: Trigger factor (434 aa).

Residues 160 to 245 (GDKAKINFVG…LNEVQAANLP (86 aa)) form the PPIase FKBP-type domain.

This sequence belongs to the FKBP-type PPIase family. Tig subfamily.

Its subcellular location is the cytoplasm. The catalysed reaction is [protein]-peptidylproline (omega=180) = [protein]-peptidylproline (omega=0). Functionally, involved in protein export. Acts as a chaperone by maintaining the newly synthesized protein in an open conformation. Functions as a peptidyl-prolyl cis-trans isomerase. The polypeptide is Trigger factor (Shewanella woodyi (strain ATCC 51908 / MS32)).